The following is a 465-amino-acid chain: MIRTRFAPSPTGYLHIGGARTALFSWAYARKHGGKFVLRIEDTDLERSTAQSTQAILDGMAWLGLDYDEGPFYQMQRLARYHEVAEQLLRRGQAYYCYCSREELDAMREQQRAAGLKPRYDGRWRDSREEPPAGVKPVVRLKNPLDGEVTFKDLIKGEITVANSELDDLVLLRGDGVPTYNFGVVIDDLDMNITHVIRGDDHVNNTPRQINILKALGAPLPQYAHVPMILGADGERLSKRHGAVSVMQYREDGYLPEALVNYLARLGWSHGDEEIFSREQLVEWFDLSNINRSPAKFNPEKLQWLNQQYLKTADNERLAELVKPFLAADGCDVTGGGTPDLRKVMNLLKERVNTIAELADAAVYFFRPLEPAEELRAQYFSAEAKGPILDLRTKLATLEWEGHAINDAIKASATAHGVKMPKVAMPLRVMVTGEAQTPAINAVLELLGREETLRRMDRQLEYFLS.

The 'HIGH' region signature appears at 8–18 (PSPTGYLHIGG). Residues 236 to 240 (RLSKR) carry the 'KMSKS' region motif. Lys-239 contacts ATP.

Belongs to the class-I aminoacyl-tRNA synthetase family. Glutamate--tRNA ligase type 1 subfamily. In terms of assembly, monomer.

It is found in the cytoplasm. The enzyme catalyses tRNA(Glu) + L-glutamate + ATP = L-glutamyl-tRNA(Glu) + AMP + diphosphate. Catalyzes the attachment of glutamate to tRNA(Glu) in a two-step reaction: glutamate is first activated by ATP to form Glu-AMP and then transferred to the acceptor end of tRNA(Glu). This Nitrosospira multiformis (strain ATCC 25196 / NCIMB 11849 / C 71) protein is Glutamate--tRNA ligase.